The sequence spans 290 residues: Porphobilinogen deaminase (290 aa).

Cys-238 carries the S-(dipyrrolylmethanemethyl)cysteine modification.

The protein belongs to the HMBS family. Monomer. The cofactor is dipyrromethane.

The enzyme catalyses 4 porphobilinogen + H2O = hydroxymethylbilane + 4 NH4(+). Its pathway is porphyrin-containing compound metabolism; protoporphyrin-IX biosynthesis; coproporphyrinogen-III from 5-aminolevulinate: step 2/4. Tetrapolymerization of the monopyrrole PBG into the hydroxymethylbilane pre-uroporphyrinogen in several discrete steps. The protein is Porphobilinogen deaminase of Clostridium botulinum (strain Eklund 17B / Type B).